A 370-amino-acid chain; its full sequence is Ornithine carbamoyltransferase, mitochondrial (370 aa).

The transit peptide at 1–38 (MPSPLRTAPQPPLRAFHNPPALRRLYSSTSHSAATPAT) directs the protein to the mitochondrion. Residues 97 to 100 (STRT), arginine 148, histidine 175, and glutamine 178 contribute to the carbamoyl phosphate site. L-ornithine is bound by residues asparagine 216, aspartate 282, serine 286, and methionine 287. The active-site Proton acceptor is cysteine 324. Residues 324–325 (CL) and arginine 351 each bind carbamoyl phosphate.

The protein belongs to the aspartate/ornithine carbamoyltransferase superfamily. OTCase family. In terms of assembly, homotrimer.

The protein localises to the mitochondrion matrix. It catalyses the reaction carbamoyl phosphate + L-ornithine = L-citrulline + phosphate + H(+). It functions in the pathway amino-acid biosynthesis; L-arginine biosynthesis; L-arginine from L-ornithine and carbamoyl phosphate: step 1/3. The protein is Ornithine carbamoyltransferase, mitochondrial (argB) of Aspergillus niger.